The sequence spans 107 residues: U1-lycotoxin-Ls1l (107 aa).

The N-terminal stretch at 1-20 (MMKVLVVVALLVTLISYSSS) is a signal peptide. The propeptide occupies 21 to 41 (EGIDDLEADELLSLMANEQTR). Disulfide bonds link Cys44/Cys59, Cys51/Cys68, Cys58/Cys86, and Cys70/Cys84.

Belongs to the neurotoxin 19 (CSTX) family. 04 (U1-Lctx) subfamily. As to expression, expressed by the venom gland.

The protein resides in the secreted. In Lycosa singoriensis (Wolf spider), this protein is U1-lycotoxin-Ls1l.